The sequence spans 860 residues: Envelope glycoprotein (860 aa).

Residues 1-6 constitute a propeptide that is removed on maturation; sequence MVSIAF. The Extracellular portion of the chain corresponds to 7 to 614; the sequence is YGGIPGGIST…GKDLWSHIGN (608 aa). 18 N-linked (GlcNAc...) asparagine; by host glycosylation sites follow: Asn40, Asn112, Asn141, Asn148, Asn186, Asn201, Asn214, Asn235, Asn244, Asn308, Asn337, Asn340, Asn346, Asn369, Asn400, Asn407, Asn412, and Asn423. The tract at residues 447–467 is fusion peptide; sequence FGISAIVAAIVAATAIAASAT. N-linked (GlcNAc...) asparagine; by host glycans are attached at residues Asn484 and Asn491. The interval 499-514 is immunosuppression; that stretch reads LIEQQIKILYAMILQT. N-linked (GlcNAc...) asparagine; by host glycosylation is found at Asn551 and Asn558. Coiled-coil stretches lie at residues 577–625 and 664–700; these read ILTT…SIIK and KKFY…YCKQ. Residues 615–635 form a helical membrane-spanning segment; sequence WIPGLGASIIKYIVMFLLIYL. Topologically, residues 636–860 are cytoplasmic; the sequence is LLTSSPKILR…TSHVSMPQYV (225 aa). The tract at residues 746–765 is disordered; it reads AAINEHKNGSGGNNPHQGSL.

As to quaternary structure, the mature envelope protein (Env) consists of a trimer of SU-TM heterodimers attached by noncovalent interactions or by a labile interchain disulfide bond. In terms of processing, specific enzymatic cleavages in vivo yield mature proteins. Envelope glycoproteins are synthesized as an inactive precursor that is N-glycosylated and processed likely by host cell furin or by a furin-like protease in the Golgi to yield the mature SU and TM proteins. The cleavage site between SU and TM requires the minimal sequence [KR]-X-[KR]-R.

The protein resides in the virion membrane. It localises to the host cell membrane. In terms of biological role, the surface protein (SU) attaches the virus to the host cell by binding to its receptor. This interaction triggers the refolding of the transmembrane protein (TM) and is thought to activate its fusogenic potential by unmasking its fusion peptide. Fusion occurs at the host cell plasma membrane. The transmembrane protein (TM) acts as a class I viral fusion protein. Under the current model, the protein has at least 3 conformational states: pre-fusion native state, pre-hairpin intermediate state, and post-fusion hairpin state. During viral and target cell membrane fusion, the coiled coil regions (heptad repeats) assume a trimer-of-hairpins structure, positioning the fusion peptide in close proximity to the C-terminal region of the ectodomain. The formation of this structure appears to drive apposition and subsequent fusion of viral and target cell membranes. Membranes fusion leads to delivery of the nucleocapsid into the cytoplasm. The chain is Envelope glycoprotein (env) from Equine infectious anemia virus (isolate P3.2-5) (EIAV).